We begin with the raw amino-acid sequence, 221 residues long: Transmembrane protein 225B (221 aa).

A run of 4 transmembrane segments spans residues 14-34 (WAIVPALTSLGYLIILVVSIF), 77-97 (VFLLSAVFLAFVTTFIMMPFA), 109-129 (FVLACISFFTGACAFLALVLH), and 147-167 (VLWPYYVLGFGIFLFIVAGTI).

It localises to the membrane. This chain is Transmembrane protein 225B, found in Homo sapiens (Human).